The chain runs to 209 residues: Large ribosomal subunit protein bL25 (209 aa).

Disordered regions lie at residues methionine 1–serine 20 and leucine 190–serine 209. Residues lysine 8–serine 20 are compositionally biased toward basic and acidic residues. A compositionally biased stretch (acidic residues) spans valine 192–serine 209.

Belongs to the bacterial ribosomal protein bL25 family. CTC subfamily. As to quaternary structure, part of the 50S ribosomal subunit; part of the 5S rRNA/L5/L18/L25 subcomplex. Contacts the 5S rRNA. Binds to the 5S rRNA independently of L5 and L18.

Its function is as follows. This is one of the proteins that binds to the 5S RNA in the ribosome where it forms part of the central protuberance. In Bartonella tribocorum (strain CIP 105476 / IBS 506), this protein is Large ribosomal subunit protein bL25.